A 332-amino-acid chain; its full sequence is Hygromycin-B 7''-O-kinase (332 aa).

D223 functions as the Proton acceptor in the catalytic mechanism.

The protein belongs to the aminoglycoside phosphotransferase family.

It catalyses the reaction hygromycin B + ATP = 7''-O-phosphohygromycin B + ADP + H(+). Its function is as follows. The aminoglycoside phosphotransferases achieve inactivation of their antibiotic substrates by phosphorylation. This is Hygromycin-B 7''-O-kinase (hyg) from Streptomyces hygroscopicus.